The sequence spans 109 residues: Guanylin (109 aa).

The first 21 residues, 1–21, serve as a signal peptide directing secretion; the sequence is MNTFLFPTLCLLGVWAALAGG. Positions 22–94 are excised as a propeptide; it reads VTVKDGEFSF…LERLETIAQD (73 aa). 3 cysteine pairs are disulfide-bonded: cysteine 63-cysteine 76, cysteine 98-cysteine 106, and cysteine 101-cysteine 109.

The protein belongs to the guanylin family.

It localises to the secreted. Its function is as follows. Endogenous activator of intestinal guanylate cyclase. It stimulates this enzyme through the same receptor binding region as the heat-stable enterotoxins. The polypeptide is Guanylin (GUCA2A) (Sus scrofa (Pig)).